Here is a 634-residue protein sequence, read N- to C-terminus: MSTSSHSGDCTAVPSNSNGTIILSAIGVVFGDIGTSPLYTLKEAFSPNYGLTPNHDTVLGILSLIFWAMMLVVTIKYVAVIMRVDNDGEGGIMALTALTQRTMPFGSRSIYIVGILGIFGTSLFFGDGVITPAISVLSAVEGLEVAEPHMKAFVVPITLAVLILLFLCQRFGTERVGKTFGPITLLWFIAIGVVGVYNIAQAPEVLHAINPSWGLHFFLEHGWHSMFVLGAVVLAVTGGEALYADMGHFGAKAIRHAWMYVVLPMLALNYLGQGALVLSNPTAIGNPFYQSIPDWGLYPMIALATAAAVIASQALITGSYSLSSQAMQLGYIPRMNVRHTSQSTIGQIYVPTVNWTLLTLVILTVIGFGDSTSMASAYGVAVTGTMMITTVLMIIYARANPRVPRLMLWMMAIVFIAVDGAFFYANIIKFMDGAWFPLLLGVVIFTFMRTWLRGRKLLHEEMRKDGINLDNFLPGLMLAPPVKVPGTAVFLTADSTVVPHALMHNLKHNKVLHERNVFLTVKTLKIPYAANSERLKIEPISNGFYRVHIRFGFMETPDVPSALMCSKDHAGIDFDPMHTTFFVSRETVIPSANRGMPIWRDKLFVLMHRNAAPANAFFRIPGNRLVELGAQVEI.

12 helical membrane passes run 21–41, 61–81, 110–130, 148–168, 180–200, 217–237, 258–278, 296–316, 348–368, 377–397, 408–428, and 432–452; these read IILS…LYTL, ILSL…VAVI, IYIV…DGVI, PHMK…LFLC, FGPI…YNIA, FFLE…LAVT, WMYV…ALVL, GLYP…QALI, IYVP…VIGF, AYGV…IIYA, LWMM…ANII, and DGAW…RTWL.

The protein belongs to the HAK/KUP transporter (TC 2.A.72) family.

The protein localises to the cell inner membrane. It catalyses the reaction K(+)(in) + H(+)(in) = K(+)(out) + H(+)(out). In terms of biological role, transport of potassium into the cell. Likely operates as a K(+):H(+) symporter. The polypeptide is Probable potassium transport system protein Kup (Xylella fastidiosa (strain 9a5c)).